Reading from the N-terminus, the 201-residue chain is MAEKFTQHTGLVVPLDAANVDTDAIIPKQFLQKVTRTGFGAHLFNDWRFLDDKGEQPNPEFVLNFPEYQGASILLARENFGCGSSREHAPWALTDYGFKVVIAPSFADIFYGNSFNNQLLPVTLSDEEVDEMFALVKANPGIRFEVDLEAQVVKAGDKSYSFSIDAFRRHCMLNGLDSIGLTLQHEDAIAAYEKKQPAFMG.

Belongs to the LeuD family. LeuD type 1 subfamily. Heterodimer of LeuC and LeuD.

The catalysed reaction is (2R,3S)-3-isopropylmalate = (2S)-2-isopropylmalate. It participates in amino-acid biosynthesis; L-leucine biosynthesis; L-leucine from 3-methyl-2-oxobutanoate: step 2/4. Its function is as follows. Catalyzes the isomerization between 2-isopropylmalate and 3-isopropylmalate, via the formation of 2-isopropylmaleate. In Cronobacter sakazakii (strain ATCC BAA-894) (Enterobacter sakazakii), this protein is 3-isopropylmalate dehydratase small subunit.